A 376-amino-acid chain; its full sequence is NifS-like protein (376 aa).

Pyridoxal 5'-phosphate contacts are provided by residues 58–59 (SE) and 184–186 (SLN).

Belongs to the class-V pyridoxal-phosphate-dependent aminotransferase family. NifS/IscS subfamily. The cofactor is pyridoxal 5'-phosphate.

The protein resides in the virion. This chain is NifS-like protein, found in African swine fever virus (isolate Tick/Malawi/Lil 20-1/1983) (ASFV).